A 404-amino-acid chain; its full sequence is Propionate kinase PduW (404 aa).

The protein belongs to the acetokinase family. PduW subfamily.

It localises to the cytoplasm. The enzyme catalyses propanoate + ATP = propanoyl phosphate + ADP. Its pathway is polyol metabolism; 1,2-propanediol degradation. The protein operates within organic acid metabolism; propanoate degradation. In terms of biological role, works with phosphate acetyltransferase (pta) to capture exogenous propionate and regenerate propionyl-CoA during degradation of propionate and 1,2-propanediol (1,2-PD). Ectopic expression partially complements a cobB deletion allowing some growth on propionate. Restores growth to an eutQ deletion on ethanolamine and tetrathionate under anoxic conditions. In Salmonella typhimurium (strain LT2 / SGSC1412 / ATCC 700720), this protein is Propionate kinase PduW.